A 103-amino-acid polypeptide reads, in one-letter code: UPF0145 protein Rsph17025_2361 (103 aa).

This sequence belongs to the UPF0145 family.

This Cereibacter sphaeroides (strain ATCC 17025 / ATH 2.4.3) (Rhodobacter sphaeroides) protein is UPF0145 protein Rsph17025_2361.